Reading from the N-terminus, the 393-residue chain is Neuroplastin (393 aa).

The N-terminal stretch at 1 to 28 (MSGSSLPGALALSLLLVSGSLLPGPGAA) is a signal peptide. 3 consecutive Ig-like domains span residues 29–134 (QNAG…PSIT), 148–234 (PRIV…IEVK), and 237–327 (PDIT…ASVS). Over 29 to 338 (QNAGFVKSPM…VLRVRSHLAP (310 aa)) the chain is Extracellular. A disulfide bond links cysteine 52 and cysteine 116. Residues 149-161 (RIVTSEEVIIRDS) form a narpin; mediates binding with FGFR1 and has antidepressant-like activity region. An intrachain disulfide couples cysteine 169 to cysteine 217. N-linked (GlcNAc...) asparagine glycans are attached at residues asparagine 170, asparagine 196, asparagine 228, asparagine 283, asparagine 295, and asparagine 316. A disulfide bridge links cysteine 258 with cysteine 315. The chain crosses the membrane as a helical span at residues 339–359 (LWPFLGILAEIIILVVIIVVY). Over 360 to 393 (EKRKRPDEVPDAGPMKTNSTNNHKDKNLRQRNTN) the chain is Cytoplasmic. Residues 366–393 (DEVPDAGPMKTNSTNNHKDKNLRQRNTN) are disordered.

In terms of assembly, interacts with ATP2B1; this interaction stabilizes ATP2B1 and increases ATPase activity; this interaction controls T cell calcium homeostasis following T cell activation. Interacts with XKR8; promoting its localization at the cell membrane. Post-translationally, isoform 1 and isoform 2 are N-glycosylated. As to expression, isoform 1 is ubiquitously expressed. Isoform 2 is brain-specific. In brain isoform 2 is highly expressed in hippocampus and cerebral cortex and weakly in cerebellum and lower brain regions. In the hippocampus isoform 2 is found in the dentate gyrus and CA1-CA4, the striatum oriens of CA3 shows the higher level.

It localises to the cell membrane. It is found in the postsynaptic density. In terms of biological role, probable homophilic and heterophilic cell adhesion molecule involved in long term potentiation at hippocampal excitatory synapses through activation of p38MAPK. May also regulate neurite outgrowth by activating the FGFR1 signaling pathway. May play a role in synaptic plasticity. Also acts as a chaperone for ATP2B1; stabilizes ATP2B1 and increases its ATPase activity. Promotes localization of XKR8 at the cell membrane. The chain is Neuroplastin (Nptn) from Rattus norvegicus (Rat).